The chain runs to 392 residues: L-lactate dehydrogenase (392 aa).

Residues Met1 to Ala380 form the FMN hydroxy acid dehydrogenase domain. A substrate-binding site is contributed by Tyr24. FMN contacts are provided by Ser106 and Gln127. Tyr129 provides a ligand contact to substrate. Residue Thr155 coordinates FMN. Arg164 provides a ligand contact to substrate. Lys251 serves as a coordination point for FMN. The active-site Proton acceptor is His275. Arg278 contacts substrate. Position 306-330 (Asp306–Arg330) interacts with FMN.

The protein belongs to the FMN-dependent alpha-hydroxy acid dehydrogenase family. It depends on FMN as a cofactor.

It is found in the cell inner membrane. It catalyses the reaction (S)-lactate + A = pyruvate + AH2. Catalyzes the conversion of L-lactate to pyruvate. Is coupled to the respiratory chain. This Chromohalobacter salexigens (strain ATCC BAA-138 / DSM 3043 / CIP 106854 / NCIMB 13768 / 1H11) protein is L-lactate dehydrogenase.